A 706-amino-acid chain; its full sequence is Polyribonucleotide nucleotidyltransferase (706 aa).

The Mg(2+) site is built by aspartate 487 and aspartate 493. The KH domain maps to 554 to 613 (PRIHTMKISSDKIKDVIGKGGAVIRALCEETGTTIEIEDDGTIKIAATEGAAAKEAIRRI). Positions 623 to 691 (GRIYQGKVAR…RQGRVRLSMK (69 aa)) constitute an S1 motif domain.

Belongs to the polyribonucleotide nucleotidyltransferase family. As to quaternary structure, component of the RNA degradosome, which is a multiprotein complex involved in RNA processing and mRNA degradation. Mg(2+) serves as cofactor.

It localises to the cytoplasm. The catalysed reaction is RNA(n+1) + phosphate = RNA(n) + a ribonucleoside 5'-diphosphate. Involved in mRNA degradation. Catalyzes the phosphorolysis of single-stranded polyribonucleotides processively in the 3'- to 5'-direction. The polypeptide is Polyribonucleotide nucleotidyltransferase (Vibrio atlanticus (strain LGP32) (Vibrio splendidus (strain Mel32))).